A 563-amino-acid polypeptide reads, in one-letter code: MNKIYYILFLSAQCLVHMGKCERNQKTTRLTRSANNASLEKGPIIERSIRMSNPWKAFMEKYDLERAHNSGIRIDLGEDAEVGNSKYRIPAGKCPVFGKGIVIENSNVSFLTPVATGAQRLKEGGFAFPNADDHISPITIANLKERYKENADLMKLNDIALCKTHAASFVIAEDQNTSYRHPAVYDEKNKTCYMLYLSAQENMGPRYCSPDSQNKDAMFCFKPDKNENFDNLVYLSKNVSNDWENKCPRKNLGNAKFGLWVDGNCEEIPYVNEVEARSLRECNRIVFEASASDQPRQYEEELTDYEKIQEGFRQNNRDMIKSAFLPVGAFNSDNFKSKGRGYNWANFDSVNNKCYIFNTKPTCLINDKNFFATTALSHPQEVDNEFPCSIYKDEIEREIKKQSRNMNLYSVDKERIVLPRIFISTDKESIKCPCEPEHISNSTCNFYVCNCVEKRAEIKENNEVIIKEEFKEDYENPDGKHKKKMLLIIIGVTGAVCVVAVASLFYFRKKAQDDKYDKMDQAEAYGKTANTRKDEMLDPEASFWGEDKRASHTTPVLMEKPYY.

The N-terminal stretch at 1-13 is a signal peptide; sequence MNKIYYILFLSAQ. The Extracellular portion of the chain corresponds to 14–487; the sequence is CLVHMGKCER…DGKHKKKMLL (474 aa). 6 N-linked (GlcNAc...) asparagine glycosylation sites follow: Asn-36, Asn-107, Asn-176, Asn-189, Asn-238, and Asn-441. A helical transmembrane segment spans residues 488–508; the sequence is IIIGVTGAVCVVAVASLFYFR. The Cytoplasmic portion of the chain corresponds to 509 to 563; that stretch reads KKAQDDKYDKMDQAEAYGKTANTRKDEMLDPEASFWGEDKRASHTTPVLMEKPYY.

This sequence belongs to the apicomplexan parasites AMA1 family.

The protein resides in the membrane. In terms of biological role, merozoite receptor PK66 is a surface antigen involved in parasite invasion of erythrocytes. The sequence is that of Merozoite receptor PK66 (PK66) from Plasmodium knowlesi (strain nuri).